We begin with the raw amino-acid sequence, 361 residues long: Chorismate synthase (361 aa).

Residues Arg-48 and Arg-54 each contribute to the NADP(+) site. Residues 125–127, 238–239, Gly-278, 293–297, and Arg-319 each bind FMN; these read RSS, NA, and KPTSS.

The protein belongs to the chorismate synthase family. In terms of assembly, homotetramer. FMNH2 serves as cofactor.

It catalyses the reaction 5-O-(1-carboxyvinyl)-3-phosphoshikimate = chorismate + phosphate. It functions in the pathway metabolic intermediate biosynthesis; chorismate biosynthesis; chorismate from D-erythrose 4-phosphate and phosphoenolpyruvate: step 7/7. Catalyzes the anti-1,4-elimination of the C-3 phosphate and the C-6 proR hydrogen from 5-enolpyruvylshikimate-3-phosphate (EPSP) to yield chorismate, which is the branch point compound that serves as the starting substrate for the three terminal pathways of aromatic amino acid biosynthesis. This reaction introduces a second double bond into the aromatic ring system. The polypeptide is Chorismate synthase (Vibrio vulnificus (strain YJ016)).